A 183-amino-acid chain; its full sequence is Segregation and condensation protein B (183 aa).

It belongs to the ScpB family. Homodimer. Homodimerization may be required to stabilize the binding of ScpA to the Smc head domains. Component of a cohesin-like complex composed of ScpA, ScpB and the Smc homodimer, in which ScpA and ScpB bind to the head domain of Smc. The presence of the three proteins is required for the association of the complex with DNA.

The protein resides in the cytoplasm. In terms of biological role, participates in chromosomal partition during cell division. May act via the formation of a condensin-like complex containing Smc and ScpA that pull DNA away from mid-cell into both cell halves. In Streptococcus pyogenes serotype M1, this protein is Segregation and condensation protein B.